The primary structure comprises 172 residues: Disulfide bond formation protein B (172 aa).

Topologically, residues 1-13 (MNWLAQLPTQRTP) are cytoplasmic. A helical transmembrane segment spans residues 14-30 (WLLFSGIVFLLEITALF). At 31 to 48 (FQYKMGLAPCIMCIYQRT) the chain is on the periplasmic side. A disulfide bridge connects residues C40 and C43. The chain crosses the membrane as a helical span at residues 49–64 (AVLGLLIAGIIGTSNP). Residues 65–71 (EHRGVRL) lie on the Cytoplasmic side of the membrane. The chain crosses the membrane as a helical span at residues 72-89 (LAYSVWAVSSVWGFIIAR). Over 90 to 145 (EHIEMQTTTDPFAFSCEFEPNFPAFMPLHEWIPSFFAATGDCGNIDWQFAGLSMPA) the chain is Periplasmic. C105 and C131 are disulfide-bonded. A helical membrane pass occupies residues 146–164 (WMEVIFALFAATLFLLVTS). Over 165-172 (RLMTKRSL) the chain is Cytoplasmic.

This sequence belongs to the DsbB family.

It is found in the cell inner membrane. Required for disulfide bond formation in some periplasmic proteins. Acts by oxidizing the DsbA protein. The chain is Disulfide bond formation protein B from Pseudoalteromonas translucida (strain TAC 125).